The chain runs to 397 residues: 4-hydroxyphenylpyruvate dioxygenase (397 aa).

VOC domains lie at 18–149 (NFHH…FVEY) and 181–339 (FIDH…IFTK). The Fe cation site is built by His184, His267, and Glu350.

It belongs to the 4HPPD family. In terms of assembly, homodimer. Requires Fe cation as cofactor.

The protein resides in the cytoplasm. The protein localises to the endoplasmic reticulum membrane. It localises to the golgi apparatus membrane. It carries out the reaction 3-(4-hydroxyphenyl)pyruvate + O2 = homogentisate + CO2. It functions in the pathway amino-acid degradation; L-phenylalanine degradation; acetoacetate and fumarate from L-phenylalanine: step 3/6. Catalyzes the conversion of 4-hydroxyphenylpyruvic acid to homogentisic acid, one of the steps in tyrosine catabolism. This is 4-hydroxyphenylpyruvate dioxygenase (hpd) from Danio rerio (Zebrafish).